We begin with the raw amino-acid sequence, 90 residues long: MAHKKAGGSSRNGRDSESKRLGVKKFGGEVVIPGNIIVRQRGTQWHPGANVGMGKDHTIFALTTGNVTYRTKSNGRVFVSVMPKTAEAAE.

Residues 1 to 22 (MAHKKAGGSSRNGRDSESKRLG) form a disordered region.

This sequence belongs to the bacterial ribosomal protein bL27 family.

This is Large ribosomal subunit protein bL27 from Allorhizobium ampelinum (strain ATCC BAA-846 / DSM 112012 / S4) (Agrobacterium vitis (strain S4)).